A 257-amino-acid chain; its full sequence is MTPSEFRQSVRRGAFRGPTAGHCGPFAQANLAILPDAYAHDFLRFCQANPKACPLLGVGEPGAFRIAALGEDLDIRTDVPSYNVYRDGRLTERVESLEALWQDDFVVFAIGCSFSFEDMLAREGIGLRHVEEGRNVPMYRTSIANRRAGIFGGQLVVSMRPLRGADAIRAVQITSRFPGVHGAPIHIGHPRELGIDDLNAPEFGDAVTIRDGELPVFWACGVTPQTALMDAKLPIAIAHTPGHMLMTDITNASLAVF.

It belongs to the D-glutamate cyclase family.

This is Putative hydro-lyase BceJ2315_40370 from Burkholderia cenocepacia (strain ATCC BAA-245 / DSM 16553 / LMG 16656 / NCTC 13227 / J2315 / CF5610) (Burkholderia cepacia (strain J2315)).